The following is a 351-amino-acid chain: Uroporphyrinogen decarboxylase (351 aa).

Substrate contacts are provided by residues 25–29, Asp-74, Tyr-151, Ser-206, and His-325; that span reads RQAGR.

The protein belongs to the uroporphyrinogen decarboxylase family. Homodimer.

The protein resides in the cytoplasm. The enzyme catalyses uroporphyrinogen III + 4 H(+) = coproporphyrinogen III + 4 CO2. It functions in the pathway porphyrin-containing compound metabolism; protoporphyrin-IX biosynthesis; coproporphyrinogen-III from 5-aminolevulinate: step 4/4. Its function is as follows. Catalyzes the decarboxylation of four acetate groups of uroporphyrinogen-III to yield coproporphyrinogen-III. The polypeptide is Uroporphyrinogen decarboxylase (Chlorobaculum parvum (strain DSM 263 / NCIMB 8327) (Chlorobium vibrioforme subsp. thiosulfatophilum)).